A 212-amino-acid chain; its full sequence is Outer-membrane lipoprotein carrier protein (212 aa).

The signal sequence occupies residues 1–29 (MSSARRRALGFSFQALLLCAAGWHGAAQA).

It belongs to the LolA family. As to quaternary structure, monomer.

Its subcellular location is the periplasm. In terms of biological role, participates in the translocation of lipoproteins from the inner membrane to the outer membrane. Only forms a complex with a lipoprotein if the residue after the N-terminal Cys is not an aspartate (The Asp acts as a targeting signal to indicate that the lipoprotein should stay in the inner membrane). This Leptothrix cholodnii (strain ATCC 51168 / LMG 8142 / SP-6) (Leptothrix discophora (strain SP-6)) protein is Outer-membrane lipoprotein carrier protein.